The following is an 89-amino-acid chain: MKVTPLGERLLIKPLKEEKKTEGGIVLPDSAKEKPMKAEVVAVGEKVENIDVKVGDRVIFSKYAGTEIKIDDVDYIIIDANDILAKIEE.

It belongs to the GroES chaperonin family. As to quaternary structure, heptamer of 7 subunits arranged in a ring. Interacts with the chaperonin GroEL.

The protein resides in the cytoplasm. Together with the chaperonin GroEL, plays an essential role in assisting protein folding. The GroEL-GroES system forms a nano-cage that allows encapsulation of the non-native substrate proteins and provides a physical environment optimized to promote and accelerate protein folding. GroES binds to the apical surface of the GroEL ring, thereby capping the opening of the GroEL channel. This is Co-chaperonin GroES from Pseudothermotoga lettingae (strain ATCC BAA-301 / DSM 14385 / NBRC 107922 / TMO) (Thermotoga lettingae).